Reading from the N-terminus, the 304-residue chain is Sulfate adenylyltransferase subunit 2 (304 aa).

It belongs to the PAPS reductase family. CysD subfamily. Heterodimer composed of CysD, the smaller subunit, and CysNC.

The enzyme catalyses sulfate + ATP + H(+) = adenosine 5'-phosphosulfate + diphosphate. Its pathway is sulfur metabolism; hydrogen sulfide biosynthesis; sulfite from sulfate: step 1/3. With CysN forms the ATP sulfurylase (ATPS) that catalyzes the adenylation of sulfate producing adenosine 5'-phosphosulfate (APS) and diphosphate, the first enzymatic step in sulfur assimilation pathway. APS synthesis involves the formation of a high-energy phosphoric-sulfuric acid anhydride bond driven by GTP hydrolysis by CysN coupled to ATP hydrolysis by CysD. The polypeptide is Sulfate adenylyltransferase subunit 2 (Xylella fastidiosa (strain Temecula1 / ATCC 700964)).